A 612-amino-acid chain; its full sequence is Threonine--tRNA ligase (612 aa).

The catalytic stretch occupies residues 218 to 509 (DHRKLGVELG…LSEHFGGNFP (292 aa)). Zn(2+) contacts are provided by Cys-310, His-361, and His-486.

Belongs to the class-II aminoacyl-tRNA synthetase family. As to quaternary structure, homodimer. Zn(2+) is required as a cofactor.

Its subcellular location is the cytoplasm. It catalyses the reaction tRNA(Thr) + L-threonine + ATP = L-threonyl-tRNA(Thr) + AMP + diphosphate + H(+). In terms of biological role, catalyzes the attachment of threonine to tRNA(Thr) in a two-step reaction: L-threonine is first activated by ATP to form Thr-AMP and then transferred to the acceptor end of tRNA(Thr). Also edits incorrectly charged L-seryl-tRNA(Thr). The polypeptide is Threonine--tRNA ligase (Helicobacter pylori (strain G27)).